A 314-amino-acid chain; its full sequence is UDP-glucose 4-epimerase (314 aa).

Residues 11 to 12, 31 to 36, 56 to 57, and 77 to 81 contribute to the NAD(+) site; these read FI, DNFATG, DI, and LAAQI. Residues Ser121 and Tyr146 each contribute to the substrate site. Residues Tyr146 and Lys150 each contribute to the NAD(+) site. Residue Tyr146 is the Proton acceptor of the active site. Residues Asn175, 189-190, 204-206, Arg213, and 271-274 contribute to the substrate site; these read VV, RVF, and RLGD.

Belongs to the NAD(P)-dependent epimerase/dehydratase family. As to quaternary structure, homodimer. Requires NAD(+) as cofactor.

The enzyme catalyses UDP-alpha-D-glucose = UDP-alpha-D-galactose. The protein operates within carbohydrate metabolism; galactose metabolism. Involved in the metabolism of galactose. Catalyzes the conversion of UDP-galactose (UDP-Gal) to UDP-glucose (UDP-Glc) through a mechanism involving the transient reduction of NAD. This is UDP-glucose 4-epimerase (galE1) from Mycobacterium tuberculosis (strain CDC 1551 / Oshkosh).